Here is a 252-residue protein sequence, read N- to C-terminus: Pyridoxine 5'-phosphate synthase (252 aa).

Asn12 contacts 3-amino-2-oxopropyl phosphate. Residue 14-15 (DH) participates in 1-deoxy-D-xylulose 5-phosphate binding. Arg23 is a binding site for 3-amino-2-oxopropyl phosphate. His48 acts as the Proton acceptor in catalysis. The 1-deoxy-D-xylulose 5-phosphate site is built by Arg50 and His55. Glu75 functions as the Proton acceptor in the catalytic mechanism. Thr105 contributes to the 1-deoxy-D-xylulose 5-phosphate binding site. His199 functions as the Proton donor in the catalytic mechanism. 3-amino-2-oxopropyl phosphate contacts are provided by residues Gly200 and 221-222 (GH).

Belongs to the PNP synthase family. As to quaternary structure, homooctamer; tetramer of dimers.

Its subcellular location is the cytoplasm. It carries out the reaction 3-amino-2-oxopropyl phosphate + 1-deoxy-D-xylulose 5-phosphate = pyridoxine 5'-phosphate + phosphate + 2 H2O + H(+). It participates in cofactor biosynthesis; pyridoxine 5'-phosphate biosynthesis; pyridoxine 5'-phosphate from D-erythrose 4-phosphate: step 5/5. Its function is as follows. Catalyzes the complicated ring closure reaction between the two acyclic compounds 1-deoxy-D-xylulose-5-phosphate (DXP) and 3-amino-2-oxopropyl phosphate (1-amino-acetone-3-phosphate or AAP) to form pyridoxine 5'-phosphate (PNP) and inorganic phosphate. The sequence is that of Pyridoxine 5'-phosphate synthase from Cereibacter sphaeroides (strain ATCC 17029 / ATH 2.4.9) (Rhodobacter sphaeroides).